The sequence spans 637 residues: Chaperone protein HtpG (637 aa).

The a; substrate-binding stretch occupies residues 1-345; that stretch reads MSQQETHGFQ…SNDLPLNVSR (345 aa). Residues 346-562 form a b region; that stretch reads EILQDNHITK…EGEMSTQMIK (217 aa). A c region spans residues 563–637; sequence LMQAAGQPVP…MNQMLLANMK (75 aa).

It belongs to the heat shock protein 90 family. As to quaternary structure, homodimer.

The protein resides in the cytoplasm. Its function is as follows. Molecular chaperone. Has ATPase activity. The sequence is that of Chaperone protein HtpG from Shewanella putrefaciens (strain CN-32 / ATCC BAA-453).